An 849-amino-acid chain; its full sequence is uncharacterized protein (849 aa).

Helical transmembrane passes span 587-607 and 620-640; these read VALG…LGLF and AGIL…TGDW.

It is found in the cell membrane. This is an uncharacterized protein from Methanocaldococcus jannaschii (strain ATCC 43067 / DSM 2661 / JAL-1 / JCM 10045 / NBRC 100440) (Methanococcus jannaschii).